The chain runs to 113 residues: Large ribosomal subunit protein uL24 (113 aa).

Belongs to the universal ribosomal protein uL24 family. As to quaternary structure, part of the 50S ribosomal subunit.

In terms of biological role, one of two assembly initiator proteins, it binds directly to the 5'-end of the 23S rRNA, where it nucleates assembly of the 50S subunit. One of the proteins that surrounds the polypeptide exit tunnel on the outside of the subunit. In Chlamydia abortus (strain DSM 27085 / S26/3) (Chlamydophila abortus), this protein is Large ribosomal subunit protein uL24.